A 362-amino-acid chain; its full sequence is sn-glycerol-3-phosphate import ATP-binding protein UgpC (362 aa).

Residues 4-235 (LTLQSVKKTY…PATVFVASFI (232 aa)) form the ABC transporter domain. 37 to 44 (GPSGCGKS) is an ATP binding site.

The protein belongs to the ABC transporter superfamily. sn-glycerol-3-phosphate importer (TC 3.A.1.1.3) family. The complex is composed of two ATP-binding proteins (UgpC), two transmembrane proteins (UgpA and UgpE) and a solute-binding protein (UgpB).

The protein localises to the cell inner membrane. It carries out the reaction sn-glycerol 3-phosphate(out) + ATP + H2O = sn-glycerol 3-phosphate(in) + ADP + phosphate + H(+). Functionally, part of the ABC transporter complex UgpBAEC involved in sn-glycerol-3-phosphate (G3P) import. Responsible for energy coupling to the transport system. The protein is sn-glycerol-3-phosphate import ATP-binding protein UgpC of Paraburkholderia xenovorans (strain LB400).